A 280-amino-acid polypeptide reads, in one-letter code: Ribosomal RNA small subunit methyltransferase A (280 aa).

Positions 27, 29, 54, 76, 102, and 122 each coordinate S-adenosyl-L-methionine.

The protein belongs to the class I-like SAM-binding methyltransferase superfamily. rRNA adenine N(6)-methyltransferase family. RsmA subfamily.

The protein resides in the cytoplasm. It catalyses the reaction adenosine(1518)/adenosine(1519) in 16S rRNA + 4 S-adenosyl-L-methionine = N(6)-dimethyladenosine(1518)/N(6)-dimethyladenosine(1519) in 16S rRNA + 4 S-adenosyl-L-homocysteine + 4 H(+). Specifically dimethylates two adjacent adenosines (A1518 and A1519) in the loop of a conserved hairpin near the 3'-end of 16S rRNA in the 30S particle. May play a critical role in biogenesis of 30S subunits. This is Ribosomal RNA small subunit methyltransferase A from Oleidesulfovibrio alaskensis (strain ATCC BAA-1058 / DSM 17464 / G20) (Desulfovibrio alaskensis).